We begin with the raw amino-acid sequence, 436 residues long: GTPase Der (436 aa).

EngA-type G domains are found at residues 4 to 167 (PVVA…PKEE) and 176 to 351 (VKFS…DNHS). GTP contacts are provided by residues 10-17 (GRPNVGKS), 57-61 (DTGGI), 119-122 (NKVD), 182-189 (GRPNVGKS), 229-233 (DTAGM), and 294-297 (NKWD). Positions 352 to 436 (LRVQSSMLND…PIRVIARKRK (85 aa)) constitute a KH-like domain.

Belongs to the TRAFAC class TrmE-Era-EngA-EngB-Septin-like GTPase superfamily. EngA (Der) GTPase family. As to quaternary structure, associates with the 50S ribosomal subunit.

In terms of biological role, GTPase that plays an essential role in the late steps of ribosome biogenesis. The chain is GTPase Der from Listeria monocytogenes serotype 4b (strain F2365).